The sequence spans 299 residues: Coenzyme PQQ synthesis protein B (299 aa).

The protein belongs to the PqqB family.

Its pathway is cofactor biosynthesis; pyrroloquinoline quinone biosynthesis. In terms of biological role, may be involved in the transport of PQQ or its precursor to the periplasm. The chain is Coenzyme PQQ synthesis protein B from Methylobacterium sp. (strain 4-46).